The chain runs to 192 residues: Shikimate kinase (192 aa).

32-37 contacts ATP; that stretch reads GAGKSA. Residue Ser-36 coordinates Mg(2+). Substrate-binding residues include Asp-54, Arg-78, and Gly-100. Arg-138 serves as a coordination point for ATP. Substrate is bound at residue Arg-157.

Belongs to the shikimate kinase family. As to quaternary structure, monomer. Requires Mg(2+) as cofactor.

The protein resides in the cytoplasm. The catalysed reaction is shikimate + ATP = 3-phosphoshikimate + ADP + H(+). The protein operates within metabolic intermediate biosynthesis; chorismate biosynthesis; chorismate from D-erythrose 4-phosphate and phosphoenolpyruvate: step 5/7. Functionally, catalyzes the specific phosphorylation of the 3-hydroxyl group of shikimic acid using ATP as a cosubstrate. The chain is Shikimate kinase from Rhizobium meliloti (strain 1021) (Ensifer meliloti).